The primary structure comprises 466 residues: 3-isopropylmalate dehydratase large subunit (466 aa).

The [4Fe-4S] cluster site is built by cysteine 347, cysteine 407, and cysteine 410.

The protein belongs to the aconitase/IPM isomerase family. LeuC type 1 subfamily. In terms of assembly, heterodimer of LeuC and LeuD. [4Fe-4S] cluster serves as cofactor.

The catalysed reaction is (2R,3S)-3-isopropylmalate = (2S)-2-isopropylmalate. Its pathway is amino-acid biosynthesis; L-leucine biosynthesis; L-leucine from 3-methyl-2-oxobutanoate: step 2/4. In terms of biological role, catalyzes the isomerization between 2-isopropylmalate and 3-isopropylmalate, via the formation of 2-isopropylmaleate. The chain is 3-isopropylmalate dehydratase large subunit from Buchnera aphidicola subsp. Diuraphis noxia.